The chain runs to 258 residues: Regulatory protein RecX (258 aa).

Belongs to the RecX family.

The protein resides in the cytoplasm. Its function is as follows. Modulates RecA activity. In Streptococcus pyogenes serotype M5 (strain Manfredo), this protein is Regulatory protein RecX.